Here is a 524-residue protein sequence, read N- to C-terminus: Serine/threonine-protein kinase PAK 2 (524 aa).

Residues 1–81 (MSDNGELEDK…PEISPPSDFE (81 aa)) are disordered. Position 2 is an N-acetylserine (Ser2). 4 positions are modified to phosphoserine: Ser2, Ser20, Ser55, and Ser58. Residue Thr60 is modified to Phosphothreonine. Lys62 is modified (N6-acetyllysine). Phosphoserine is present on Ser64. The span at 67 to 81 (KEKERPEISPPSDFE) shows a compositional bias: basic and acidic residues. A GTPase-binding region spans residues 69-112 (KERPEISPPSDFEHTIHVGFDAVTGEFTGMPEQWARLLQTSNIT). Positions 69–137 (KERPEISPPS…KFYDSNTVKQ (69 aa)) are autoregulatory region. One can recognise a CRIB domain in the interval 74-87 (ISPPSDFEHTIHVG). Lys128 is modified (N6-acetyllysine). The residue at position 134 (Thr134) is a Phosphothreonine. Tyr139 is modified (phosphotyrosine). Ser141 carries the phosphoserine modification. The interval 142 to 188 (FTPPEKDGFPSGTPALNTKGSETSAVVTEEDDDDEDAAPPVIAPRPD) is disordered. Position 143 is a phosphothreonine (Thr143). Ser152 is subject to Phosphoserine. A phosphothreonine mark is found at Thr154, Thr159, and Thr169. Residues 155–167 (PALNTKGSETSAV) show a composition bias toward polar residues. The segment covering 169-178 (TEEDDDDEDA) has biased composition (acidic residues). A Phosphoserine modification is found at Ser197. Positions 204–228 (APVGDSNVDSGAKSSDKQKKKAKMT) are disordered. Positions 245-251 (PKKKYTR) match the Nuclear localization signal motif. Residues 249–499 (YTRYEKIGQG…SAKELLQHPF (251 aa)) form the Protein kinase domain. ATP is bound by residues 255–263 (IGQGASGTV) and Lys278. Arg367 functions as the Proton acceptor in the catalytic mechanism. Thr402 is subject to Phosphothreonine; by autocatalysis.

The protein belongs to the protein kinase superfamily. STE Ser/Thr protein kinase family. STE20 subfamily. In terms of assembly, interacts tightly with GTP-bound but not GDP-bound CDC42/p21 and RAC1. Interacts with SH3MD4. Interacts with SCRIB. Interacts with ARHGEF7 and GIT1. PAK-2p34 interacts with ARHGAP10. Interacts with RAC1. In terms of processing, full-length PAK2 is autophosphorylated when activated by CDC42/p21. Following cleavage, both peptides, PAK-2p27 and PAK-2p34, become highly autophosphorylated. Autophosphorylation of PAK-2p27 can occur in the absence of any effectors and is dependent on phosphorylation of Thr-402, because PAK-2p27 is acting as an exogenous substrate. During apoptosis proteolytically cleaved by caspase-3 or caspase-3-like proteases to yield active PAK-2p34. Post-translationally, ubiquitinated, leading to its proteasomal degradation.

Its subcellular location is the cytoplasm. It localises to the nucleus. The protein resides in the perinuclear region. The protein localises to the membrane. It carries out the reaction L-seryl-[protein] + ATP = O-phospho-L-seryl-[protein] + ADP + H(+). The catalysed reaction is L-threonyl-[protein] + ATP = O-phospho-L-threonyl-[protein] + ADP + H(+). Its activity is regulated as follows. Activated by binding small G proteins. Binding of GTP-bound CDC42 or RAC1 to the autoregulatory region releases monomers from the autoinhibited dimer, enables phosphorylation of Thr-402 and allows the kinase domain to adopt an active structure. Following caspase cleavage, autophosphorylated PAK-2p34 is constitutively active. Functionally, serine/threonine protein kinase that plays a role in a variety of different signaling pathways including cytoskeleton regulation, cell motility, cell cycle progression, apoptosis or proliferation. Acts as a downstream effector of the small GTPases CDC42 and RAC1. Activation by the binding of active CDC42 and RAC1 results in a conformational change and a subsequent autophosphorylation on several serine and/or threonine residues. Full-length PAK2 stimulates cell survival and cell growth. Phosphorylates MAPK4 and MAPK6 and activates the downstream target MAPKAPK5, a regulator of F-actin polymerization and cell migration. Phosphorylates JUN and plays an important role in EGF-induced cell proliferation. Phosphorylates many other substrates including histone H4 to promote assembly of H3.3 and H4 into nucleosomes, BAD, ribosomal protein S6, or MBP. Phosphorylates CASP7, thereby preventing its activity. Additionally, associates with ARHGEF7 and GIT1 to perform kinase-independent functions such as spindle orientation control during mitosis. On the other hand, apoptotic stimuli such as DNA damage lead to caspase-mediated cleavage of PAK2, generating PAK-2p34, an active p34 fragment that translocates to the nucleus and promotes cellular apoptosis involving the JNK signaling pathway. Caspase-activated PAK2 phosphorylates MKNK1 and reduces cellular translation. The sequence is that of Serine/threonine-protein kinase PAK 2 (Pak2) from Mus musculus (Mouse).